Consider the following 154-residue polypeptide: Golgi-associated plant pathogenesis-related protein 1 (154 aa).

The segment at 1–21 is disordered; that stretch reads MGKSASKQFHNEVLKAHNEYR. G2 carries the N-myristoyl glycine lipid modification. Residues 9 to 21 are compositionally biased toward basic and acidic residues; that stretch reads FHNEVLKAHNEYR. Residues 14 to 132 form the SCP domain; it reads LKAHNEYRQK…SDGSSFVVAR (119 aa). Residues 30–53 are a coiled coil; the sequence is KLCKNLNREAQQYSEALASTRILK. The segment at 91–98 is interaction with CAV1; the sequence is NFQQPGFT.

This sequence belongs to the CRISP family. As to quaternary structure, homodimer. Interacts with CAV1. As to expression, highest expression in lung and peripheral leukocytes, and minor expression in liver and kidney.

Its subcellular location is the golgi apparatus membrane. This Homo sapiens (Human) protein is Golgi-associated plant pathogenesis-related protein 1 (GLIPR2).